Reading from the N-terminus, the 249-residue chain is UPF0758 protein Oant_1909 (249 aa).

One can recognise an MPN domain in the interval 127-249 (VLGSWNKVIE…HASFRGLGLI (123 aa)). H198, H200, and D211 together coordinate Zn(2+). The JAMM motif motif lies at 198–211 (HNHPSGDPTPSRAD).

Belongs to the UPF0758 family.

The protein is UPF0758 protein Oant_1909 of Brucella anthropi (strain ATCC 49188 / DSM 6882 / CCUG 24695 / JCM 21032 / LMG 3331 / NBRC 15819 / NCTC 12168 / Alc 37) (Ochrobactrum anthropi).